The primary structure comprises 351 residues: Cytochrome c biogenesis protein CcsA (351 aa).

8 helical membrane passes run 12–32 (NISFGILFATMLIYWLGAAFP), 37–57 (LSILGSTGMAIANLCIATLLG), 68–88 (ISNLYESLFFLTWGITTIHLI), 97–117 (LVGVFTSPIAMGISAFAALTL), 143–163 (MMLSYATLIVGALLAIAFLII), 259–279 (IIGLGFPLLTIGIIAGAVWAN), 294–314 (WALITWLVFAAYLHARITKGW), and 320–340 (AILAATGFAVVWVCYLGVNLL).

The protein belongs to the CcmF/CycK/Ccl1/NrfE/CcsA family. In terms of assembly, may interact with ccs1.

It localises to the cellular thylakoid membrane. Functionally, required during biogenesis of c-type cytochromes (cytochrome c6 and cytochrome f) at the step of heme attachment. This chain is Cytochrome c biogenesis protein CcsA, found in Trichodesmium erythraeum (strain IMS101).